The following is a 202-amino-acid chain: Small ribosomal subunit protein uS4c (202 aa).

The interval 18–45 is disordered; that stretch reads LPGLTRKMAKRKSPPGQHGAASKKPSQY. One can recognise an S4 RNA-binding domain in the interval 90–152; it reads MRLDTTIFRL…SRSRKLIEGY (63 aa).

The protein belongs to the universal ribosomal protein uS4 family. In terms of assembly, part of the 30S ribosomal subunit. Contacts protein S5. The interaction surface between S4 and S5 is involved in control of translational fidelity.

It is found in the plastid. The protein localises to the chloroplast. In terms of biological role, one of the primary rRNA binding proteins, it binds directly to 16S rRNA where it nucleates assembly of the body of the 30S subunit. With S5 and S12 plays an important role in translational accuracy. This chain is Small ribosomal subunit protein uS4c (rps4), found in Nephroselmis olivacea (Green alga).